A 271-amino-acid chain; its full sequence is MFSIQQPLLVFSDLDGTLLDSHSYDWQPAAPWLSRLREGNVPVILCSSKTSAEMLYLQKTLGLQGLPLIAENGAVIQLAEQWQDIDGFPRIISGISHGEISQVLNTLREKEHFKFTTFDDVDDATIAEWTGLSRSQAALTQLHEASVTLIWRDSDERMAQFTARLNELGLQFMQGARFWHVLDASAGKDQAANWIIATYQQLSGKRPTTLGLGDGPNDAPLLEVMDYAVIVKGLNREGVHLHDEDPTRVWRTQREGPEGWREGLDHFFSAR.

The Nucleophile role is filled by Asp-13. 3 residues coordinate Mg(2+): Asp-13, Asp-15, and Asp-214.

It belongs to the HAD-like hydrolase superfamily. MPGP family. Mg(2+) serves as cofactor.

It is found in the cytoplasm. It carries out the reaction 2-O-(alpha-D-mannosyl)-3-phosphoglycerate + H2O = (2R)-2-O-(alpha-D-mannosyl)-glycerate + phosphate. The chain is Mannosyl-3-phosphoglycerate phosphatase from Escherichia coli (strain SMS-3-5 / SECEC).